The following is a 205-amino-acid chain: dITP/XTP pyrophosphatase (205 aa).

7–12 provides a ligand contact to substrate; it reads SNNRGK. Positions 39 and 68 each coordinate Mg(2+). Aspartate 68 serves as the catalytic Proton acceptor. Residues alanine 69, 154-157, lysine 177, and 182-183 contribute to the substrate site; these read FGFD and HR.

It belongs to the HAM1 NTPase family. As to quaternary structure, homodimer. Mg(2+) is required as a cofactor.

It catalyses the reaction XTP + H2O = XMP + diphosphate + H(+). The enzyme catalyses dITP + H2O = dIMP + diphosphate + H(+). It carries out the reaction ITP + H2O = IMP + diphosphate + H(+). Pyrophosphatase that catalyzes the hydrolysis of nucleoside triphosphates to their monophosphate derivatives, with a high preference for the non-canonical purine nucleotides XTP (xanthosine triphosphate), dITP (deoxyinosine triphosphate) and ITP. Seems to function as a house-cleaning enzyme that removes non-canonical purine nucleotides from the nucleotide pool, thus preventing their incorporation into DNA/RNA and avoiding chromosomal lesions. The sequence is that of dITP/XTP pyrophosphatase from Acidovorax ebreus (strain TPSY) (Diaphorobacter sp. (strain TPSY)).